The chain runs to 99 residues: MMNMQNMMKQAQKLQKQMEQKQADLAAMQFTGKSAQDLVTATFTGDKKLVGIDFKEAVVDPEDVETLQDMTTQAINDALTQIDEATKKTLGAFAGKLPF.

The protein belongs to the YbaB/EbfC family. Homodimer.

The protein localises to the cytoplasm. It is found in the nucleoid. Its function is as follows. Binds to DNA and alters its conformation. May be involved in regulation of gene expression, nucleoid organization and DNA protection. The protein is Nucleoid-associated protein MGAS2096_Spy1605 of Streptococcus pyogenes serotype M12 (strain MGAS2096).